The following is a 670-amino-acid chain: Solute carrier organic anion transporter family member 1A3 (670 aa).

The Cytoplasmic segment spans residues 1–20 (MGDLEKGAATHGAGCFAKIK). Residues 21–40 (VFLMALTCAYVSKSLSGTFM) traverse the membrane as a helical segment. The Extracellular segment spans residues 41–59 (SSMLTQIERQFGIPTAIVG). Residues 60–80 (FINGSFEIGNLLLIIFVSYFG) form a helical membrane-spanning segment. At 81 to 86 (MKLHRP) the chain is on the cytoplasmic side. The chain crosses the membrane as a helical span at residues 87 to 111 (IVIGVGCAVMGLGCFIISLPHFLMG). Over 112-155 (RYEYETTILPTSNLSSNSFLCMENQTQTLNPAQDPAECVKEVKS) the chain is Extracellular. N124 and N135 each carry an N-linked (GlcNAc...) asparagine glycan. The helical transmembrane segment at 156-184 (LMWIYVLVGNIIRGIGETPIMPLGVSYIE) threads the bilayer. Residues 185–203 (NFAKSENSPLYIGILETGK) are Cytoplasmic-facing. A helical membrane pass occupies residues 204–224 (MIGPIFGLLLGSFCASIYVDT). Residues 225 to 242 (GSVNTDDLTITPTDIRWV) lie on the Extracellular side of the membrane. Residues 243–267 (GAWWIGFLVCAGVNILISIPFFFFP) form a helical membrane-spanning segment. Over 268–311 (KTLPKEGLQENVDGTENAKEESTEKRPRKKNRGITKDFFPFLKS) the chain is Cytoplasmic. The interval 277-296 (ENVDGTENAKEESTEKRPRK) is disordered. Basic and acidic residues predominate over residues 283–292 (ENAKEESTEK). The helical transmembrane segment at 312–333 (PVLQPDLHAVHPYKVLQVNAFN) threads the bilayer. Over 334-353 (IYFSFLPKYLENQYGKSTAE) the chain is Extracellular. A helical transmembrane segment spans residues 354-377 (VIFLMGVYNLPAICIGYLIAGFMM). Residues 378-381 (KKFK) are Cytoplasmic-facing. A helical transmembrane segment spans residues 382-405 (ITVKTAAFLAFCLSLSEYSFGFCN). Topologically, residues 406–513 (FLITCDNVPV…PECTNKLQYL (108 aa)) are extracellular. In terms of domain architecture, Kazal-like spans 433–488 (NNVLADCNTRCSCLTKTWDPVCGDNGLAYMSACLAGCEKSVGTGTNMVFHNCSCIQ). 3 disulfide bridges follow: C439-C469, C445-C465, and C454-C486. N-linked (GlcNAc...) asparagine glycans are attached at residues N483 and N492. The chain crosses the membrane as a helical span at residues 514–536 (LILSGFLSILYSFAAIPGYMVFL). Over 537 to 545 (RCIKSEEKS) the chain is Cytoplasmic. Residues 546 to 571 (LGIGIHAFCIRVFAGIPAPIYFGALI) traverse the membrane as a helical segment. The Extracellular segment spans residues 572-605 (DRTCLHWGTQKCGAPGACRMYDINSFRRIYLGMS). Residues 606–623 (AALRGSSYLPAFVIVILT) form a helical membrane-spanning segment. The Cytoplasmic segment spans residues 624–670 (RKFSLPGKINSSEMEIAEMKLTEKESQCTDVHRNPKFKNDGELKTKL).

Belongs to the organo anion transporter (TC 2.A.60) family. In terms of tissue distribution, all isoforms are detected in kidney, and many are kidney specific. Isoforms 2 and 13 are also detected in liver. Isoforms 4 and 9/K4 are ubiquitous, but isoform 9/K13 is kidney specific. Isoforms 5 and 14 are detected in all tissues tested, with the exception of pancreas and spleen. Isoforms 11 and 15 are detected in kidney, pancreas and testis. Isoform 7 is detected in kidney, liver, testis and spleen.

It localises to the cell membrane. In terms of biological role, mediates the Na(+)-independent transport of organic anions such as methotrexate, taurocholate, folate and prostaglandin E2. May contribute to renal secretion and/or reabsorption of hydrophobic anionic compounds. Mediates renal clearance of methotrexate from the blood. The protein is Solute carrier organic anion transporter family member 1A3 (Slco1a3) of Rattus norvegicus (Rat).